The sequence spans 109 residues: MNDLEFMDRAENLLKAVETSCDRINDQTLADIDSQRVGSMVTLVFSNKSQIVINLQKPLHEIWLAAKSGGYHYKFDNKQWLDTKGQGEFFANLSRCASEQAGCPLVLNS.

The protein belongs to the frataxin family.

Its function is as follows. Involved in iron-sulfur (Fe-S) cluster assembly. May act as a regulator of Fe-S biogenesis. The protein is Iron-sulfur cluster assembly protein CyaY of Albidiferax ferrireducens (strain ATCC BAA-621 / DSM 15236 / T118) (Rhodoferax ferrireducens).